We begin with the raw amino-acid sequence, 214 residues long: MQAYQRDFIRFAIDRGVLRFGEFTLKSGRTSPYFFNAGLFNSGSALAQLGRFYAAAIAESGIPFDVLFGPAYKGIPLAATTAVALAEHHNRDLPWCFNRKEAKAHGEGGSLVGAPLTGDVLIIDDVITAGTAIREVMQIIASQDGAKAAGVLIALNRQERGNGELSAIQEVERDFGIPVISIVSLNQVLEFLADDPQLKQHLPAVEAYRAQFGV.

5-phospho-alpha-D-ribose 1-diphosphate is bound at residue Lys26. Residue 34-35 (FF) coordinates orotate. 5-phospho-alpha-D-ribose 1-diphosphate is bound by residues 72–73 (YK), Arg99, Lys100, Lys103, His105, and 124–132 (DDVITAGTA). The orotate site is built by Thr128 and Arg157.

The protein belongs to the purine/pyrimidine phosphoribosyltransferase family. PyrE subfamily. Homodimer. Requires Mg(2+) as cofactor.

It carries out the reaction orotidine 5'-phosphate + diphosphate = orotate + 5-phospho-alpha-D-ribose 1-diphosphate. The protein operates within pyrimidine metabolism; UMP biosynthesis via de novo pathway; UMP from orotate: step 1/2. In terms of biological role, catalyzes the transfer of a ribosyl phosphate group from 5-phosphoribose 1-diphosphate to orotate, leading to the formation of orotidine monophosphate (OMP). This chain is Orotate phosphoribosyltransferase, found in Pseudomonas fluorescens (strain Pf0-1).